Consider the following 109-residue polypeptide: UPF0060 membrane protein ABO_1373 (109 aa).

4 consecutive transmembrane segments (helical) span residues 1–21 (MLAL…IVGC), 33–53 (PGWV…LLSL), 63–83 (AAYG…VEGV), and 87–107 (PWDF…MFAP).

Belongs to the UPF0060 family.

The protein localises to the cell inner membrane. The sequence is that of UPF0060 membrane protein ABO_1373 from Alcanivorax borkumensis (strain ATCC 700651 / DSM 11573 / NCIMB 13689 / SK2).